Consider the following 817-residue polypeptide: U3 small nucleolar RNA-associated protein 13 (817 aa).

WD repeat units follow at residues 59 to 100 (EDEQ…RSMK), 102 to 139 (SSPSYILDADSTSTLLAVGGTDGSIIVVDIENGYITHS), 142 to 187 (GHGG…HTLQ), 191 to 233 (SAVR…KCKL), 238 to 280 (PVNQ…VLKR), 386 to 425 (GHEDLLNSLDATEDGLWIATASKDNTAIVWRYNENSCKFD), 432 to 476 (GHSA…ASMD), 489 to 528 (AHEKDINALSVSPNDSIFATASYDKTCKIWNLENGELEAT), 531 to 572 (NHKR…KTLE), 573 to 614 (GHTN…KTLD), 616 to 654 (HNNRLWALSTMNDGDMIVSADADGVFQFWKDCTEQEIEE), and 664 to 705 (EQEQ…LGES).

Interacts with snoRNA U3. Interacts with MPP10. Component of the ribosomal small subunit (SSU) processome composed of at least 40 protein subunits and snoRNA U3.

It localises to the nucleus. The protein resides in the nucleolus. Its function is as follows. Involved in nucleolar processing of pre-18S ribosomal RNA. The protein is U3 small nucleolar RNA-associated protein 13 (UTP13) of Saccharomyces cerevisiae (strain ATCC 204508 / S288c) (Baker's yeast).